The chain runs to 147 residues: Large ribosomal subunit protein uL13 (147 aa).

Belongs to the universal ribosomal protein uL13 family. In terms of assembly, part of the 50S ribosomal subunit.

This protein is one of the early assembly proteins of the 50S ribosomal subunit, although it is not seen to bind rRNA by itself. It is important during the early stages of 50S assembly. In Rhodococcus erythropolis (strain PR4 / NBRC 100887), this protein is Large ribosomal subunit protein uL13.